The following is a 483-amino-acid chain: METPAGKADRPRDHDSEQSQDNVVSWEGEDDPTNPLNWSPLAKWVHVAIISIGTFTIAREKSPLASSIFAPGVVELAHEFHEENQLLTTIVVSIFVLGLAFGPLLAAPISEMYGRWICYTVFNILYTIFTVACGVSTNISMLIVFRFFAGVTGSAPLTIGGGTVADLFPMHQRGLALSFVTLGQAVAPAIGPVAGGFLTQNLGWRWVFWLLTIVNGTITICQILFTRETYAMTILNRRAKRLRKTTVHSSVTHRSVNFAIFFYSLVRPCKLLLLSPISLIVALCCAVIYGILYVLVTTFSPVFQDTYHFSIGISGLGYLGLGIGNLVGLWIFSMTSDRYMVAQANRFGSAKPEHRLPMMILSGPVIAAGLFWYGWSVQARIHWMMPIVGSGIVGLGNMFFFMPMVSYLVDSFPTYAASAIAANAVLRSIGGAVLPLAGQRMYDTLGFGWGNSILAFMALVFNPLLIAIYRYGEYIRTRWQVKL.

The tract at residues 1 to 31 (METPAGKADRPRDHDSEQSQDNVVSWEGEDD) is disordered. The span at 7–17 (KADRPRDHDSE) shows a compositional bias: basic and acidic residues. 11 helical membrane passes run 89 to 109 (TIVV…AAPI), 124 to 144 (ILYT…MLIV), 147 to 167 (FFAG…VADL), 179 to 199 (FVTL…GFLT), 206 to 226 (WVFW…ILFT), 276 to 296 (PISL…YVLV), 311 to 331 (IGIS…GLWI), 357 to 377 (PMMI…GWSV), 385 to 405 (MPIV…MPMV), 416 to 436 (AASA…VLPL), and 448 to 468 (GWGN…LIAI).

Belongs to the major facilitator superfamily.

The protein localises to the cell membrane. MFS-type transporter; part of the gene cluster that mediates the biosynthesis of heptelidic acid (HA), a sesquiterpene lactone that acts as an inhibitor of glyceraldehyde-3-phosphatedehydrogenase (GAPDH) and a growth inhibitor of the salt-tolerant lactic acid bacteria in soy sauce brewing. Might be required for efficient secretion of heptelidic acid. This chain is MFS-type transporter hepF (hepF), found in Aspergillus oryzae (strain ATCC 42149 / RIB 40) (Yellow koji mold).